Here is a 575-residue protein sequence, read N- to C-terminus: NEDD4-binding protein 2-like 2 (575 aa).

Basic and acidic residues-rich tracts occupy residues 69–87 (QEDK…EMPG), 129–142 (PPEK…KSET), and 149–167 (DSKR…KLEM). Disordered stretches follow at residues 69-169 (QEDK…EMDT) and 555-575 (GEQR…ADDY). A coiled-coil region spans residues 162–194 (SKKLEMDTELSQFYKEIEELENENEASQGSCTE). A compositionally biased stretch (polar residues) spans 564–575 (GSHSQVSIADDY).

This Mus musculus (Mouse) protein is NEDD4-binding protein 2-like 2 (N4bp2l2).